Here is a 215-residue protein sequence, read N- to C-terminus: Pyrrolidone-carboxylate peptidase (215 aa).

Catalysis depends on residues E80, C143, and H167.

This sequence belongs to the peptidase C15 family. Homotetramer.

The protein resides in the cytoplasm. The enzyme catalyses Release of an N-terminal pyroglutamyl group from a polypeptide, the second amino acid generally not being Pro.. Its function is as follows. Removes 5-oxoproline from various penultimate amino acid residues except L-proline. In Yersinia pestis bv. Antiqua (strain Antiqua), this protein is Pyrrolidone-carboxylate peptidase.